Consider the following 624-residue polypeptide: tRNA uridine 5-carboxymethylaminomethyl modification enzyme MnmG (624 aa).

Residues 16-21 (GAGHAG), Val-128, and Ser-183 contribute to the FAD site. Residue 275-289 (GPRYCPSIEDKVVRF) participates in NAD(+) binding. FAD is bound at residue Gln-372.

It belongs to the MnmG family. In terms of assembly, homodimer. Heterotetramer of two MnmE and two MnmG subunits. It depends on FAD as a cofactor.

It is found in the cytoplasm. In terms of biological role, NAD-binding protein involved in the addition of a carboxymethylaminomethyl (cmnm) group at the wobble position (U34) of certain tRNAs, forming tRNA-cmnm(5)s(2)U34. This Geobacter metallireducens (strain ATCC 53774 / DSM 7210 / GS-15) protein is tRNA uridine 5-carboxymethylaminomethyl modification enzyme MnmG.